The sequence spans 281 residues: Shikimate dehydrogenase (NADP(+)) (281 aa).

Residues 15 to 17 (SKS) and threonine 62 each bind shikimate. Lysine 66 (proton acceptor) is an active-site residue. Asparagine 87 and aspartate 102 together coordinate shikimate. Residues 127–131 (GAGGS), 151–156 (NRTPER), and leucine 217 each bind NADP(+). Tyrosine 219 contacts shikimate. NADP(+) is bound at residue glycine 241.

This sequence belongs to the shikimate dehydrogenase family. In terms of assembly, homodimer.

It carries out the reaction shikimate + NADP(+) = 3-dehydroshikimate + NADPH + H(+). It functions in the pathway metabolic intermediate biosynthesis; chorismate biosynthesis; chorismate from D-erythrose 4-phosphate and phosphoenolpyruvate: step 4/7. Involved in the biosynthesis of the chorismate, which leads to the biosynthesis of aromatic amino acids. Catalyzes the reversible NADPH linked reduction of 3-dehydroshikimate (DHSA) to yield shikimate (SA). The sequence is that of Shikimate dehydrogenase (NADP(+)) from Stenotrophomonas maltophilia (strain K279a).